The following is a 433-amino-acid chain: Sulfhydrylase FUB7 (433 aa).

An N6-(pyridoxal phosphate)lysine modification is found at Lys211.

This sequence belongs to the trans-sulfuration enzymes family. The cofactor is pyridoxal 5'-phosphate.

Its pathway is mycotoxin biosynthesis. Functionally, sulfhydrylase; part of the gene cluster that mediates the biosynthesis of fusaric acid, a mycotoxin with low to moderate toxicity to animals and humans, but with high phytotoxic properties. L-aspartate is suggested as fusaric acid amino acid precursor that is activated and further processed to O-acetyl-L-homoserine by cluster enzymes aspartate kinase FUB3 and homoserine O-acetyltransferase FUB5, as well as enzymes of the primary metabolism. The polyketide synthase (PKS) FUB1 generates the triketide trans-2-hexenal which is presumptively released by the hydrolase FUB4 and linked to the NRPS-bound amino acid precursor by NAD(P)-dependent dehydrogenase FUB6. FUB1, FUB4, and the non-canonical NRPS Fub8 may form an enzyme complex. Further processing of the NRPS-bound intermediate might be carried out by FUB6 and the O-acetylhomoserine FUB7, enabling a spontaneous electrocyclization to close the carbon backbone of fusaric acid. Dihydrofusaric acid is likely to be released via reduction by the thioester reductase (TR) domain of FUB8 whereupon the final oxidation to fusaric acid may (also) be performed by the FMN-dependent dehydrogenase FUB9. This is Sulfhydrylase FUB7 from Gibberella moniliformis (strain M3125 / FGSC 7600) (Maize ear and stalk rot fungus).